The chain runs to 326 residues: Glyoxylate/hydroxypyruvate reductase B (326 aa).

Residues Arg237 and Glu266 contribute to the active site. His285 acts as the Proton donor in catalysis.

This sequence belongs to the D-isomer specific 2-hydroxyacid dehydrogenase family. GhrB subfamily. As to quaternary structure, homodimer.

The protein localises to the cytoplasm. The enzyme catalyses glycolate + NADP(+) = glyoxylate + NADPH + H(+). The catalysed reaction is (R)-glycerate + NAD(+) = 3-hydroxypyruvate + NADH + H(+). It catalyses the reaction (R)-glycerate + NADP(+) = 3-hydroxypyruvate + NADPH + H(+). Its function is as follows. Catalyzes the NADPH-dependent reduction of glyoxylate and hydroxypyruvate into glycolate and glycerate, respectively. The sequence is that of Glyoxylate/hydroxypyruvate reductase B from Yersinia pseudotuberculosis serotype O:1b (strain IP 31758).